We begin with the raw amino-acid sequence, 505 residues long: Protein DETOXIFICATION 50 (505 aa).

Transmembrane regions (helical) follow at residues 46-66 (LVLT…FLGG), 78-98 (AAAF…MGVE), 121-141 (IILL…MEKI), 155-175 (AHIF…LHPL), 194-214 (IASF…GLGI), 219-239 (LSGV…ICFF), 275-295 (ISVC…GFLL), 305-325 (GILI…SLGV), 344-364 (AAIV…AFTV), 380-400 (IMKL…GNCP), 424-444 (AFYA…GFGF), and 446-466 (GLWL…MAAT).

It belongs to the multi antimicrobial extrusion (MATE) (TC 2.A.66.1) family. Preferentially expressed in rosette leaves. Detected mainly in the vascular tissues and guard cells. Mostly detected at reproductive stages in young anthers, in mature pollens and during pollen germination on the pistil. Also expressed in developing seeds.

The protein localises to the cell membrane. It is found in the late endosome membrane. Functionally, functions as a multidrug and toxin extrusion transporter in the export of abscisic acid (ABA) in guard cells. Plays a role in ABA-mediated growth inhibition and responses to drought conditions. May act as a negative regulator of hypocotyl cell elongation in the light. In Arabidopsis thaliana (Mouse-ear cress), this protein is Protein DETOXIFICATION 50.